The sequence spans 129 residues: Large ribosomal subunit protein bL12c (129 aa).

The protein belongs to the bacterial ribosomal protein bL12 family. Homodimer. Part of the ribosomal stalk of the 50S ribosomal subunit. Forms a multimeric L10(L12)X complex, where L10 forms an elongated spine to which 2 to 4 L12 dimers bind in a sequential fashion. Binds GTP-bound translation factors.

The protein resides in the plastid. Its subcellular location is the chloroplast. Its function is as follows. Forms part of the ribosomal stalk which helps the ribosome interact with GTP-bound translation factors. Is thus essential for accurate translation. This Pyropia yezoensis (Susabi-nori) protein is Large ribosomal subunit protein bL12c.